We begin with the raw amino-acid sequence, 872 residues long: Probable GPI-anchored adhesin-like protein PGA25 (872 aa).

A signal peptide spans 1–19 (MKVTAVSSVLLTVAALTNA). The span at 43–65 (PAAAPAAQPAAQPTTQSPADQPT) shows a compositional bias: low complexity. 3 disordered regions span residues 43-383 (PAAA…TIIP), 492-517 (KPTG…DETD), and 623-809 (PDDW…ECDT). The span at 66-83 (VQSPVSSDQPSTAQPVAQ) shows a compositional bias: polar residues. 2 stretches are compositionally biased toward low complexity: residues 84–110 (NNLL…TRST) and 125–171 (SSEA…SSSS). N-linked (GlcNAc...) asparagine glycosylation occurs at asparagine 92. The segment covering 196–207 (ETDDEDCVEETE) has biased composition (acidic residues). 3 stretches are compositionally biased toward low complexity: residues 208-225 (SPTS…VATT), 242-260 (SSAP…SSTT), and 274-293 (SSVP…NTTT). The N-linked (GlcNAc...) asparagine glycan is linked to asparagine 290. A compositionally biased stretch (acidic residues) spans 317-328 (AEEDDEECEDPT). The segment covering 349–363 (TSQSKTSVSSVVSKS) has biased composition (low complexity). The segment covering 366–376 (EDDDDETECET) has biased composition (acidic residues). Over residues 495–506 (GSGSITVLPTKS) the composition is skewed to polar residues. Composition is skewed to acidic residues over residues 624–635 (DDWEDDGYEGED) and 646–659 (DDGE…DDGE). Composition is skewed to gly residues over residues 666–692 (SSSG…GSGS), 701–710 (SSGGTWGGSG), and 731–740 (SWWGGSGSGS). The segment covering 741–760 (SSGSSSGVSSGDSGSSSVTG) has biased composition (low complexity). A compositionally biased stretch (gly residues) spans 761–771 (GSSGSWWGGSG). The segment covering 780–808 (DGYDDEDDQTPEPECDDEDDSWDDDEECD) has biased composition (acidic residues). Alanine 845 carries GPI-anchor amidated alanine lipidation. The propeptide at 846-872 (QSVTQIENIGGKVSASGLFVVLGLLLI) is removed in mature form.

It belongs to the HYR1/IFF family. In terms of processing, the GPI-anchor is attached to the protein in the endoplasmic reticulum and serves to target the protein to the cell surface. There, the glucosamine-inositol phospholipid moiety is cleaved off and the GPI-modified mannoprotein is covalently attached via its lipidless GPI glycan remnant to the 1,6-beta-glucan of the outer cell wall layer.

Its subcellular location is the secreted. The protein resides in the cell wall. It localises to the membrane. Functionally, probable GPI-anchored cell wall protein involved in cell wall organization, hyphal growth, as well as in host-fungal interaction and virulence. The sequence is that of Probable GPI-anchored adhesin-like protein PGA25 (PGA25) from Candida albicans (strain SC5314 / ATCC MYA-2876) (Yeast).